The chain runs to 260 residues: 3-methyl-2-oxobutanoate hydroxymethyltransferase (260 aa).

Mg(2+) is bound by residues aspartate 42 and aspartate 81. 3-methyl-2-oxobutanoate is bound by residues 42–43 (DS), aspartate 81, and lysine 109. Glutamate 111 serves as a coordination point for Mg(2+). The active-site Proton acceptor is the glutamate 178.

It belongs to the PanB family. Homodecamer; pentamer of dimers. It depends on Mg(2+) as a cofactor.

The protein resides in the cytoplasm. The enzyme catalyses 3-methyl-2-oxobutanoate + (6R)-5,10-methylene-5,6,7,8-tetrahydrofolate + H2O = 2-dehydropantoate + (6S)-5,6,7,8-tetrahydrofolate. It participates in cofactor biosynthesis; (R)-pantothenate biosynthesis; (R)-pantoate from 3-methyl-2-oxobutanoate: step 1/2. Its function is as follows. Catalyzes the reversible reaction in which hydroxymethyl group from 5,10-methylenetetrahydrofolate is transferred onto alpha-ketoisovalerate to form ketopantoate. The chain is 3-methyl-2-oxobutanoate hydroxymethyltransferase from Ruthia magnifica subsp. Calyptogena magnifica.